Here is a 691-residue protein sequence, read N- to C-terminus: Elongation factor G (691 aa).

The tr-type G domain occupies glutamate 8 to isoleucine 282. Residues alanine 17 to threonine 24, aspartate 81 to histidine 85, and asparagine 135 to aspartate 138 contribute to the GTP site.

The protein belongs to the TRAFAC class translation factor GTPase superfamily. Classic translation factor GTPase family. EF-G/EF-2 subfamily.

The protein resides in the cytoplasm. Its function is as follows. Catalyzes the GTP-dependent ribosomal translocation step during translation elongation. During this step, the ribosome changes from the pre-translocational (PRE) to the post-translocational (POST) state as the newly formed A-site-bound peptidyl-tRNA and P-site-bound deacylated tRNA move to the P and E sites, respectively. Catalyzes the coordinated movement of the two tRNA molecules, the mRNA and conformational changes in the ribosome. This chain is Elongation factor G, found in Synechococcus sp. (strain WH7803).